The primary structure comprises 153 residues: MEKREVNKALYDLQRSAMVYSSNDTPPRWSTTMDADTRPTDSDADAIIDDVSREKSMREDHKSFDDVIPVKKIIYWKGVNPVTVINEYCQITRRDWSFRIESVGPSNSPTFYACVDIDGRVFDKADGKSKRDAKNNAAKLAVDKLLSYVIIRF.

The Z-binding domain occupies 1-33; it reads MEKREVNKALYDLQRSAMVYSSNDTPPRWSTTM. The segment covering 22–34 has biased composition (polar residues); it reads SNDTPPRWSTTMD. The tract at residues 22 to 44 is disordered; sequence SNDTPPRWSTTMDADTRPTDSDA. One can recognise a DRBM domain in the interval 80–147; the sequence is NPVTVINEYC…AKLAVDKLLS (68 aa).

It belongs to the orthopoxvirus OPG065 family. As to quaternary structure, interacts with host G1P2/ISG15. Interacts with host EIF2AK2/PKR. Interacts with host ZBP1.

Its function is as follows. RNA-binding protein that plays a role in the inhibition of multiple cellular antiviral responses activated by double-stranded RNA (dsRNA), such as inhibition of PKR activation, necroptosis, and IFN-mediated antiviral activities. Recognizes and binds Z-RNA structures via its Z-binding domain and dsRNA via its DRBM domain: RNA-binding activity is required to escape host ZBP1-dependent necroptosis. Mechanistically, the Z-binding domain binds Z-RNAs that are produced during vaccinia virus infection, thereby competing with Z-RNA detection by host ZBP1, suppressing ZBP1-dependent necroptosis. Acts as a key inhibitor of the interferon response by blocking the phosphorylation and subsequent activation of IRF3 and IRF7 kinases that are required for interferon-alpha gene expression. Inhibits NF-kappa-B activation and the ubiquitin-like protein ISG15, which is an early antiviral protein. The binding with host ISG15 subsequently blocks host ISGylation. The protein is RNA-binding protein OPG065 (OPG065) of Monkeypox virus.